A 256-amino-acid polypeptide reads, in one-letter code: Phosphatidylglycerol--prolipoprotein diacylglyceryl transferase 2 (256 aa).

3 helical membrane-spanning segments follow: residues 11-31, 46-66, and 83-103; these read LKIY…TLLF, FNAT…LYII, and FGNG…IALC. Arginine 130 is a binding site for a 1,2-diacyl-sn-glycero-3-phospho-(1'-sn-glycerol). The next 3 helical transmembrane spans lie at 142-162, 164-184, and 221-241; these read AETT…PAGV, LYPT…FLLW, and VGLL…GILL.

It belongs to the Lgt family.

The protein resides in the cell membrane. It catalyses the reaction L-cysteinyl-[prolipoprotein] + a 1,2-diacyl-sn-glycero-3-phospho-(1'-sn-glycerol) = an S-1,2-diacyl-sn-glyceryl-L-cysteinyl-[prolipoprotein] + sn-glycerol 1-phosphate + H(+). The protein operates within protein modification; lipoprotein biosynthesis (diacylglyceryl transfer). Its function is as follows. Catalyzes the transfer of the diacylglyceryl group from phosphatidylglycerol to the sulfhydryl group of the N-terminal cysteine of a prolipoprotein, the first step in the formation of mature lipoproteins. The polypeptide is Phosphatidylglycerol--prolipoprotein diacylglyceryl transferase 2 (Clostridium perfringens (strain 13 / Type A)).